The chain runs to 61 residues: Photosystem II reaction center protein K (61 aa).

Positions 1 to 24 (MLNIFSLICICLNSALYSSSLFFA) are excised as a propeptide. A helical membrane pass occupies residues 40–60 (MPVIPLFFFLLAFVWQAAVSF).

This sequence belongs to the PsbK family. PSII is composed of 1 copy each of membrane proteins PsbA, PsbB, PsbC, PsbD, PsbE, PsbF, PsbH, PsbI, PsbJ, PsbK, PsbL, PsbM, PsbT, PsbX, PsbY, PsbZ, Psb30/Ycf12, at least 3 peripheral proteins of the oxygen-evolving complex and a large number of cofactors. It forms dimeric complexes.

It localises to the plastid. It is found in the chloroplast thylakoid membrane. One of the components of the core complex of photosystem II (PSII). PSII is a light-driven water:plastoquinone oxidoreductase that uses light energy to abstract electrons from H(2)O, generating O(2) and a proton gradient subsequently used for ATP formation. It consists of a core antenna complex that captures photons, and an electron transfer chain that converts photonic excitation into a charge separation. This is Photosystem II reaction center protein K from Panax ginseng (Korean ginseng).